Reading from the N-terminus, the 80-residue chain is Small ribosomal subunit protein uS17 (80 aa).

It belongs to the universal ribosomal protein uS17 family. As to quaternary structure, part of the 30S ribosomal subunit.

Its function is as follows. One of the primary rRNA binding proteins, it binds specifically to the 5'-end of 16S ribosomal RNA. The sequence is that of Small ribosomal subunit protein uS17 from Brucella anthropi (strain ATCC 49188 / DSM 6882 / CCUG 24695 / JCM 21032 / LMG 3331 / NBRC 15819 / NCTC 12168 / Alc 37) (Ochrobactrum anthropi).